The sequence spans 334 residues: Holliday junction branch migration complex subunit RuvB (334 aa).

Positions 4 to 184 are large ATPase domain (RuvB-L); it reads ADRLVSAGVI…FGIVQRLEFY (181 aa). ATP-binding positions include Ile23, Arg24, Gly65, Lys68, Thr69, Thr70, 131-133, Arg174, Tyr184, and Arg221; that span reads EDY. Thr69 provides a ligand contact to Mg(2+). The interval 185 to 255 is small ATPAse domain (RuvB-S); it reads RVEDLQHIVG…VASRALDMLS (71 aa). Residues 258 to 334 form a head domain (RuvB-H) region; that stretch reads SEGFDYMDRK…YKHFGITREG (77 aa). Residues Arg294, Arg313, and Arg318 each coordinate DNA.

The protein belongs to the RuvB family. In terms of assembly, homohexamer. Forms an RuvA(8)-RuvB(12)-Holliday junction (HJ) complex. HJ DNA is sandwiched between 2 RuvA tetramers; dsDNA enters through RuvA and exits via RuvB. An RuvB hexamer assembles on each DNA strand where it exits the tetramer. Each RuvB hexamer is contacted by two RuvA subunits (via domain III) on 2 adjacent RuvB subunits; this complex drives branch migration. In the full resolvosome a probable DNA-RuvA(4)-RuvB(12)-RuvC(2) complex forms which resolves the HJ.

It is found in the cytoplasm. The enzyme catalyses ATP + H2O = ADP + phosphate + H(+). Functionally, the RuvA-RuvB-RuvC complex processes Holliday junction (HJ) DNA during genetic recombination and DNA repair, while the RuvA-RuvB complex plays an important role in the rescue of blocked DNA replication forks via replication fork reversal (RFR). RuvA specifically binds to HJ cruciform DNA, conferring on it an open structure. The RuvB hexamer acts as an ATP-dependent pump, pulling dsDNA into and through the RuvAB complex. RuvB forms 2 homohexamers on either side of HJ DNA bound by 1 or 2 RuvA tetramers; 4 subunits per hexamer contact DNA at a time. Coordinated motions by a converter formed by DNA-disengaged RuvB subunits stimulates ATP hydrolysis and nucleotide exchange. Immobilization of the converter enables RuvB to convert the ATP-contained energy into a lever motion, pulling 2 nucleotides of DNA out of the RuvA tetramer per ATP hydrolyzed, thus driving DNA branch migration. The RuvB motors rotate together with the DNA substrate, which together with the progressing nucleotide cycle form the mechanistic basis for DNA recombination by continuous HJ branch migration. Branch migration allows RuvC to scan DNA until it finds its consensus sequence, where it cleaves and resolves cruciform DNA. The chain is Holliday junction branch migration complex subunit RuvB from Erwinia tasmaniensis (strain DSM 17950 / CFBP 7177 / CIP 109463 / NCPPB 4357 / Et1/99).